Consider the following 225-residue polypeptide: tRNA (guanine-N(1)-)-methyltransferase (225 aa).

S-adenosyl-L-methionine contacts are provided by residues Gly112 and 132-137 (IGDYVL).

It belongs to the RNA methyltransferase TrmD family. Homodimer.

It localises to the cytoplasm. It carries out the reaction guanosine(37) in tRNA + S-adenosyl-L-methionine = N(1)-methylguanosine(37) in tRNA + S-adenosyl-L-homocysteine + H(+). Functionally, specifically methylates guanosine-37 in various tRNAs. The protein is tRNA (guanine-N(1)-)-methyltransferase of Porphyromonas gingivalis (strain ATCC BAA-308 / W83).